We begin with the raw amino-acid sequence, 375 residues long: Alpha-1,2-galactosyltransferase (375 aa).

Topologically, residues 1 to 2 (MR) are cytoplasmic. A helical; Signal-anchor for type II membrane protein membrane pass occupies residues 3–23 (FAPYLISAVVITTIILGGAWW). Over 24-375 (TSAMDTKLQT…HIQNLLKPSS (352 aa)) the chain is Lumenal.

The protein belongs to the glycosyltransferase 34 family. In terms of processing, O-glycosylated.

It is found in the golgi apparatus membrane. Its function is as follows. Involved in the O- and N-linked oligosaccharide modification of proteins transported through the Golgi stack. This occurs in cis Golgi where the enzyme transfers galactose from UDP-galactose to a variety of mannose based acceptors. The chain is Alpha-1,2-galactosyltransferase (gma12) from Schizosaccharomyces pombe (strain 972 / ATCC 24843) (Fission yeast).